Reading from the N-terminus, the 295-residue chain is ATP synthase gamma chain (295 aa).

This sequence belongs to the ATPase gamma chain family. F-type ATPases have 2 components, CF(1) - the catalytic core - and CF(0) - the membrane proton channel. CF(1) has five subunits: alpha(3), beta(3), gamma(1), delta(1), epsilon(1). CF(0) has three main subunits: a, b and c.

It is found in the cell membrane. In terms of biological role, produces ATP from ADP in the presence of a proton gradient across the membrane. The gamma chain is believed to be important in regulating ATPase activity and the flow of protons through the CF(0) complex. In Acetivibrio thermocellus (strain ATCC 27405 / DSM 1237 / JCM 9322 / NBRC 103400 / NCIMB 10682 / NRRL B-4536 / VPI 7372) (Clostridium thermocellum), this protein is ATP synthase gamma chain.